We begin with the raw amino-acid sequence, 270 residues long: 4-hydroxy-tetrahydrodipicolinate reductase (270 aa).

Residues 8–13 (GALGRM), Asp-34, 102–104 (GTT), and 128–131 (SQNY) each bind NAD(+). His-160 (proton donor/acceptor) is an active-site residue. His-161 serves as a coordination point for (S)-2,3,4,5-tetrahydrodipicolinate. Lys-164 (proton donor) is an active-site residue. 170–171 (GT) lines the (S)-2,3,4,5-tetrahydrodipicolinate pocket.

It belongs to the DapB family.

Its subcellular location is the cytoplasm. The catalysed reaction is (S)-2,3,4,5-tetrahydrodipicolinate + NAD(+) + H2O = (2S,4S)-4-hydroxy-2,3,4,5-tetrahydrodipicolinate + NADH + H(+). It carries out the reaction (S)-2,3,4,5-tetrahydrodipicolinate + NADP(+) + H2O = (2S,4S)-4-hydroxy-2,3,4,5-tetrahydrodipicolinate + NADPH + H(+). It functions in the pathway amino-acid biosynthesis; L-lysine biosynthesis via DAP pathway; (S)-tetrahydrodipicolinate from L-aspartate: step 4/4. Functionally, catalyzes the conversion of 4-hydroxy-tetrahydrodipicolinate (HTPA) to tetrahydrodipicolinate. The sequence is that of 4-hydroxy-tetrahydrodipicolinate reductase from Methanococcus maripaludis (strain C6 / ATCC BAA-1332).